The chain runs to 555 residues: Probable ferredoxin/ferredoxin--NADP reductase (555 aa).

2 4Fe-4S ferredoxin-type domains span residues 2-29 and 37-66; these read PYIITQSCCNDGSCVFACPVNCIHPTPD and EMLYIDPVACVDCGACVSACPVGAIASDTR. 7 residues coordinate [4Fe-4S] cluster: Cys9, Cys15, Cys19, Cys46, Cys49, Cys52, and Cys56. The tract at residues 115–555 is ferredoxin--NADP reductase; sequence VAIVGSGPAA…APPLRLRALS (441 aa). FAD contacts are provided by Ala123, Glu143, Leu151, and Ile187. NADP(+) contacts are provided by residues Arg213, 258–261, 302–303, and Glu314; these read NGNV and RR. Residues Trp453 and 460–462 contribute to the FAD site; that span reads GFI. Gly460 is an NADP(+) binding site.

This sequence in the C-terminal section; belongs to the ferredoxin--NADP reductase family. It depends on [4Fe-4S] cluster as a cofactor. FAD is required as a cofactor.

It carries out the reaction 2 reduced [2Fe-2S]-[ferredoxin] + NADP(+) + H(+) = 2 oxidized [2Fe-2S]-[ferredoxin] + NADPH. The sequence is that of Probable ferredoxin/ferredoxin--NADP reductase (fprB) from Mycobacterium leprae (strain TN).